The sequence spans 333 residues: Anthranilate phosphoribosyltransferase (333 aa).

5-phospho-alpha-D-ribose 1-diphosphate contacts are provided by residues Gly-78, 81–82 (GD), Thr-86, 88–91 (NVST), 106–114 (KHGNYSVSS), and Ser-118. Residue Gly-78 participates in anthranilate binding. Ser-90 is a Mg(2+) binding site. Asn-109 serves as a coordination point for anthranilate. Arg-164 serves as a coordination point for anthranilate. Mg(2+) contacts are provided by Asp-222 and Glu-223.

This sequence belongs to the anthranilate phosphoribosyltransferase family. Homodimer. Requires Mg(2+) as cofactor.

It catalyses the reaction N-(5-phospho-beta-D-ribosyl)anthranilate + diphosphate = 5-phospho-alpha-D-ribose 1-diphosphate + anthranilate. It functions in the pathway amino-acid biosynthesis; L-tryptophan biosynthesis; L-tryptophan from chorismate: step 2/5. Catalyzes the transfer of the phosphoribosyl group of 5-phosphorylribose-1-pyrophosphate (PRPP) to anthranilate to yield N-(5'-phosphoribosyl)-anthranilate (PRA). This Natronomonas pharaonis (strain ATCC 35678 / DSM 2160 / CIP 103997 / JCM 8858 / NBRC 14720 / NCIMB 2260 / Gabara) (Halobacterium pharaonis) protein is Anthranilate phosphoribosyltransferase.